A 397-amino-acid chain; its full sequence is Cysteine desulfurase IscS (397 aa).

Residues 72–73 (GS), Asn-152, Gln-180, and 200–202 (SAH) each bind pyridoxal 5'-phosphate. Position 203 is an N6-(pyridoxal phosphate)lysine (Lys-203). A pyridoxal 5'-phosphate-binding site is contributed by Thr-238. Residue Cys-328 is the Cysteine persulfide intermediate of the active site. Residue Cys-328 coordinates [2Fe-2S] cluster.

This sequence belongs to the class-V pyridoxal-phosphate-dependent aminotransferase family. NifS/IscS subfamily. In terms of assembly, homodimer. Forms a heterotetramer with IscU, interacts with other sulfur acceptors. Pyridoxal 5'-phosphate serves as cofactor.

The protein resides in the cytoplasm. It catalyses the reaction (sulfur carrier)-H + L-cysteine = (sulfur carrier)-SH + L-alanine. The protein operates within cofactor biosynthesis; iron-sulfur cluster biosynthesis. Master enzyme that delivers sulfur to a number of partners involved in Fe-S cluster assembly, tRNA modification or cofactor biosynthesis. Catalyzes the removal of elemental sulfur atoms from cysteine to produce alanine. Functions as a sulfur delivery protein for Fe-S cluster synthesis onto IscU, an Fe-S scaffold assembly protein, as well as other S acceptor proteins. This Clostridium botulinum (strain Kyoto / Type A2) protein is Cysteine desulfurase IscS.